Reading from the N-terminus, the 170-residue chain is CDP-archaeol synthase (170 aa).

A run of 5 helical transmembrane segments spans residues 6–26 (LLWA…PVLV), 53–73 (GLIG…FITP), 83–103 (LLLA…GSFF), 114–134 (PAIG…AYPV), and 140–160 (GQII…NYFA).

This sequence belongs to the CDP-archaeol synthase family. The cofactor is Mg(2+).

It localises to the cell membrane. The enzyme catalyses 2,3-bis-O-(geranylgeranyl)-sn-glycerol 1-phosphate + CTP + H(+) = CDP-2,3-bis-O-(geranylgeranyl)-sn-glycerol + diphosphate. It functions in the pathway membrane lipid metabolism; glycerophospholipid metabolism. Catalyzes the formation of CDP-2,3-bis-(O-geranylgeranyl)-sn-glycerol (CDP-archaeol) from 2,3-bis-(O-geranylgeranyl)-sn-glycerol 1-phosphate (DGGGP) and CTP. This reaction is the third ether-bond-formation step in the biosynthesis of archaeal membrane lipids. The polypeptide is CDP-archaeol synthase (Thermococcus onnurineus (strain NA1)).